The sequence spans 706 residues: Elongation factor G (706 aa).

Positions 8–297 (SYVRNIGIGA…AVVDYLPSPN (290 aa)) constitute a tr-type G domain. GTP contacts are provided by residues 17 to 24 (AHIDAGKT), 95 to 99 (DTPGH), and 149 to 152 (NKMD).

The protein belongs to the TRAFAC class translation factor GTPase superfamily. Classic translation factor GTPase family. EF-G/EF-2 subfamily.

It localises to the cytoplasm. Functionally, catalyzes the GTP-dependent ribosomal translocation step during translation elongation. During this step, the ribosome changes from the pre-translocational (PRE) to the post-translocational (POST) state as the newly formed A-site-bound peptidyl-tRNA and P-site-bound deacylated tRNA move to the P and E sites, respectively. Catalyzes the coordinated movement of the two tRNA molecules, the mRNA and conformational changes in the ribosome. The protein is Elongation factor G of Orientia tsutsugamushi (strain Ikeda) (Rickettsia tsutsugamushi).